We begin with the raw amino-acid sequence, 352 residues long: Tropomodulin-3 (352 aa).

A Phosphoserine modification is found at Ser-25.

Belongs to the tropomodulin family. Binds to the N-terminus of tropomyosin and to actin. Interacts with FLII. Ubiquitous.

Its subcellular location is the cytoplasm. It is found in the cytoskeleton. Blocks the elongation and depolymerization of the actin filaments at the pointed end. The Tmod/TM complex contributes to the formation of the short actin protofilament, which in turn defines the geometry of the membrane skeleton. This Homo sapiens (Human) protein is Tropomodulin-3 (TMOD3).